We begin with the raw amino-acid sequence, 484 residues long: ATP synthase subunit beta (484 aa).

162–169 is an ATP binding site; the sequence is GGAGVGKT.

Belongs to the ATPase alpha/beta chains family. F-type ATPases have 2 components, CF(1) - the catalytic core - and CF(0) - the membrane proton channel. CF(1) has five subunits: alpha(3), beta(3), gamma(1), delta(1), epsilon(1). CF(0) has four main subunits: a(1), b(1), b'(1) and c(9-12).

The protein resides in the cellular thylakoid membrane. The catalysed reaction is ATP + H2O + 4 H(+)(in) = ADP + phosphate + 5 H(+)(out). Produces ATP from ADP in the presence of a proton gradient across the membrane. The catalytic sites are hosted primarily by the beta subunits. The polypeptide is ATP synthase subunit beta (Trichodesmium erythraeum (strain IMS101)).